The following is a 76-amino-acid chain: MAIGTPAHEFRELNEEELVNRLNEAKEELFNLRFQLATGQLTNNRRLRTVKRDIARIYTVIRERELGLSVVPGAEA.

This sequence belongs to the universal ribosomal protein uL29 family.

The sequence is that of Large ribosomal subunit protein uL29 from Corynebacterium efficiens (strain DSM 44549 / YS-314 / AJ 12310 / JCM 11189 / NBRC 100395).